The primary structure comprises 288 residues: ATP synthase gamma chain (288 aa).

This sequence belongs to the ATPase gamma chain family. As to quaternary structure, F-type ATPases have 2 components, CF(1) - the catalytic core - and CF(0) - the membrane proton channel. CF(1) has five subunits: alpha(3), beta(3), gamma(1), delta(1), epsilon(1). CF(0) has three main subunits: a, b and c.

The protein resides in the cell inner membrane. Produces ATP from ADP in the presence of a proton gradient across the membrane. The gamma chain is believed to be important in regulating ATPase activity and the flow of protons through the CF(0) complex. The polypeptide is ATP synthase gamma chain (Aliivibrio salmonicida (strain LFI1238) (Vibrio salmonicida (strain LFI1238))).